Here is a 319-residue protein sequence, read N- to C-terminus: MPAMDVLLANPRGFCAGVDRAIEIVKRAIETLGAPIYVRHEVVHNRFVVDDLKQRGAIFVEELDEVPDDATVIFSAHGVSQAVRQEAERRGLRVFDATCPLVTKVHFEVARHCRAGRDVVLIGHAGHPEVEGTMGQWSRERGAGTIYLVEDIEQVATLDVRQPDNLAYTTQTTLSVDDTMGIIEALRARYPAMQGPRHDDICYATQNRQDAVRDLARQCDLVLVVGSPNSSNSNRLSELARRDGVESYLIDNASEIDPAWIVGKQHIGLTAGASAPQVLVDGVLARLRELGAAGVSELEGEPESMVFALPKELRLRLVS.

C15 contributes to the [4Fe-4S] cluster binding site. (2E)-4-hydroxy-3-methylbut-2-enyl diphosphate contacts are provided by H44 and H77. Dimethylallyl diphosphate-binding residues include H44 and H77. Isopentenyl diphosphate contacts are provided by H44 and H77. A [4Fe-4S] cluster-binding site is contributed by C99. H127 provides a ligand contact to (2E)-4-hydroxy-3-methylbut-2-enyl diphosphate. Dimethylallyl diphosphate is bound at residue H127. H127 contributes to the isopentenyl diphosphate binding site. E129 acts as the Proton donor in catalysis. A (2E)-4-hydroxy-3-methylbut-2-enyl diphosphate-binding site is contributed by T172. C202 serves as a coordination point for [4Fe-4S] cluster. (2E)-4-hydroxy-3-methylbut-2-enyl diphosphate is bound by residues S230, S231, N232, and S274. Residues S230, S231, N232, and S274 each contribute to the dimethylallyl diphosphate site. Isopentenyl diphosphate is bound by residues S230, S231, N232, and S274.

It belongs to the IspH family. [4Fe-4S] cluster serves as cofactor.

It carries out the reaction isopentenyl diphosphate + 2 oxidized [2Fe-2S]-[ferredoxin] + H2O = (2E)-4-hydroxy-3-methylbut-2-enyl diphosphate + 2 reduced [2Fe-2S]-[ferredoxin] + 2 H(+). The catalysed reaction is dimethylallyl diphosphate + 2 oxidized [2Fe-2S]-[ferredoxin] + H2O = (2E)-4-hydroxy-3-methylbut-2-enyl diphosphate + 2 reduced [2Fe-2S]-[ferredoxin] + 2 H(+). Its pathway is isoprenoid biosynthesis; dimethylallyl diphosphate biosynthesis; dimethylallyl diphosphate from (2E)-4-hydroxy-3-methylbutenyl diphosphate: step 1/1. It participates in isoprenoid biosynthesis; isopentenyl diphosphate biosynthesis via DXP pathway; isopentenyl diphosphate from 1-deoxy-D-xylulose 5-phosphate: step 6/6. Catalyzes the conversion of 1-hydroxy-2-methyl-2-(E)-butenyl 4-diphosphate (HMBPP) into a mixture of isopentenyl diphosphate (IPP) and dimethylallyl diphosphate (DMAPP). Acts in the terminal step of the DOXP/MEP pathway for isoprenoid precursor biosynthesis. The polypeptide is 4-hydroxy-3-methylbut-2-enyl diphosphate reductase (Xanthomonas euvesicatoria pv. vesicatoria (strain 85-10) (Xanthomonas campestris pv. vesicatoria)).